Here is a 332-residue protein sequence, read N- to C-terminus: Putative ankyrin repeat protein R896 (332 aa).

ANK repeat units lie at residues 159-188, 190-218, 219-248, 249-278, and 280-308; these read GNDNAMIIAAQKGNLEIVKFLVESGANVKS, DNCAVRLASEFGHLDVVEYLYKSGANVKA, DGNYAITWACKNGHLPVIEFLTSVGADIKA, AQNLPIKMAAIGGHLNVIKYLVDRGANIST, and NDYVFNIACRNGHTDLAEYAVSLGADIFS.

This Acanthamoeba polyphaga mimivirus (APMV) protein is Putative ankyrin repeat protein R896.